Reading from the N-terminus, the 314-residue chain is ATP synthase gamma chain (314 aa).

It belongs to the ATPase gamma chain family. In terms of assembly, F-type ATPases have 2 components, CF(1) - the catalytic core - and CF(0) - the membrane proton channel. CF(1) has five subunits: alpha(3), beta(3), gamma(1), delta(1), epsilon(1). CF(0) has three main subunits: a, b and c.

The protein resides in the cell inner membrane. Functionally, produces ATP from ADP in the presence of a proton gradient across the membrane. The gamma chain is believed to be important in regulating ATPase activity and the flow of protons through the CF(0) complex. This chain is ATP synthase gamma chain, found in Gloeobacter violaceus (strain ATCC 29082 / PCC 7421).